The sequence spans 224 residues: Flagellar L-ring protein (224 aa).

An N-terminal signal peptide occupies residues 1–15 (MRSLLFSLTALVLAG). The N-palmitoyl cysteine moiety is linked to residue C16. C16 carries the S-diacylglycerol cysteine lipid modification.

Belongs to the FlgH family. In terms of assembly, the basal body constitutes a major portion of the flagellar organelle and consists of four rings (L,P,S, and M) mounted on a central rod.

The protein localises to the cell outer membrane. It is found in the bacterial flagellum basal body. Assembles around the rod to form the L-ring and probably protects the motor/basal body from shearing forces during rotation. This is Flagellar L-ring protein from Idiomarina loihiensis (strain ATCC BAA-735 / DSM 15497 / L2-TR).